The sequence spans 349 residues: tRNA pseudouridine synthase D (349 aa).

Phe-26 is a substrate binding site. Asp-79 serves as the catalytic Nucleophile. Asn-128 is a substrate binding site. Residues Gly-154–Leu-302 form the TRUD domain. Position 328 (Phe-328) interacts with substrate.

This sequence belongs to the pseudouridine synthase TruD family.

The enzyme catalyses uridine(13) in tRNA = pseudouridine(13) in tRNA. Functionally, responsible for synthesis of pseudouridine from uracil-13 in transfer RNAs. This chain is tRNA pseudouridine synthase D, found in Yersinia pseudotuberculosis serotype O:1b (strain IP 31758).